A 264-amino-acid polypeptide reads, in one-letter code: MSWHGFKKAVNRAGTSVMMKTGHVERTVDREFETEERRYRTMESAAKKLQKEAKGYLDALRAMTASQTRIANTIDAFYGDAGSKDGVSAYYRQVVEDLDADTVKELDGPFRTTVLDPISRFCSYFPDINAAITKRNHKLLDHDAMRAKVQKLVDKPSNDTTKLPRTEKEAAMAKEVYETLNNQLVSELPQLIALRVPYLDPSFEALVKIQLRFCREGYEKMAQVQQYFDNSVREDYSNGLLDDKVEQVLQSMRDLSIAGLNNSQ.

Positions 17–237 constitute a BAR domain; the sequence is VMMKTGHVER…FDNSVREDYS (221 aa). Coiled-coil stretches lie at residues 25-65 and 165-187; these read ERTV…AMTA and RTEK…LVSE.

The protein resides in the cytoplasm. It localises to the cytoskeleton. In terms of biological role, involved in cytokinesis and septation where it has a role in the localization of F-actin. The polypeptide is Protein hob3 (hob3) (Schizosaccharomyces pombe (strain 972 / ATCC 24843) (Fission yeast)).